Here is a 170-residue protein sequence, read N- to C-terminus: Ribosome maturation factor RimM (170 aa).

Positions 98-170 (PDEYYWVDLE…LIVVDWDPDF (73 aa)) constitute a PRC barrel domain.

This sequence belongs to the RimM family. As to quaternary structure, binds ribosomal protein uS19.

It localises to the cytoplasm. Functionally, an accessory protein needed during the final step in the assembly of 30S ribosomal subunit, possibly for assembly of the head region. Essential for efficient processing of 16S rRNA. May be needed both before and after RbfA during the maturation of 16S rRNA. It has affinity for free ribosomal 30S subunits but not for 70S ribosomes. The chain is Ribosome maturation factor RimM from Xanthomonas campestris pv. campestris (strain 8004).